The following is a 660-amino-acid chain: Methionine--tRNA ligase 1 (660 aa).

The short motif at 15–25 (YYPSGKLHIGH) is the 'HIGH' region element. Positions 310–314 (KMSKS) match the 'KMSKS' region motif. K313 serves as a coordination point for ATP. Residues 560–660 (DFFKVELRVA…QNLPNGTKIK (101 aa)) form the tRNA-binding domain.

This sequence belongs to the class-I aminoacyl-tRNA synthetase family. MetG type 2B subfamily. As to quaternary structure, homodimer.

The protein localises to the cytoplasm. The catalysed reaction is tRNA(Met) + L-methionine + ATP = L-methionyl-tRNA(Met) + AMP + diphosphate. Functionally, is required not only for elongation of protein synthesis but also for the initiation of all mRNA translation through initiator tRNA(fMet) aminoacylation. In Bacillus cereus (strain ATCC 14579 / DSM 31 / CCUG 7414 / JCM 2152 / NBRC 15305 / NCIMB 9373 / NCTC 2599 / NRRL B-3711), this protein is Methionine--tRNA ligase 1.